The following is a 151-amino-acid chain: MD-2-related lipid-recognition protein (151 aa).

A signal peptide spans 1–18; the sequence is MAALHWLLLAALLGCTLA. Intrachain disulfides connect Cys27–Cys141, Cys45–Cys51, and Cys95–Cys100. N-linked (GlcNAc...) asparagine glycosylation is present at Asn58.

In terms of processing, N-glycosylated. In terms of tissue distribution, hemolymph (at protein level). Constitutively expressed mainly in fat body and also in hemocytes and secreted into hemolymph. Not detected in midgut, epidermis, or Malpighian tubule of naive larvae.

The protein localises to the secreted. Functionally, binds to lipopolysaccharide from a variety of Gram-negative bacteria and to lipid A. The polypeptide is MD-2-related lipid-recognition protein (Manduca sexta (Tobacco hawkmoth)).